A 560-amino-acid chain; its full sequence is DNA ligase B (560 aa).

Catalysis depends on K124, which acts as the N6-AMP-lysine intermediate.

It belongs to the NAD-dependent DNA ligase family. LigB subfamily.

The catalysed reaction is NAD(+) + (deoxyribonucleotide)n-3'-hydroxyl + 5'-phospho-(deoxyribonucleotide)m = (deoxyribonucleotide)n+m + AMP + beta-nicotinamide D-nucleotide.. In terms of biological role, catalyzes the formation of phosphodiester linkages between 5'-phosphoryl and 3'-hydroxyl groups in double-stranded DNA using NAD as a coenzyme and as the energy source for the reaction. This is DNA ligase B from Escherichia coli O7:K1 (strain IAI39 / ExPEC).